We begin with the raw amino-acid sequence, 279 residues long: Thymidylate synthase (279 aa).

Position 133–134 (133–134 (RR)) interacts with dUMP. Catalysis depends on C154, which acts as the Nucleophile. DUMP-binding positions include 178–181 (RSND), N189, and 219–221 (HIY). D181 provides a ligand contact to (6R)-5,10-methylene-5,6,7,8-tetrahydrofolate. (6R)-5,10-methylene-5,6,7,8-tetrahydrofolate is bound at residue A278.

Belongs to the thymidylate synthase family. Bacterial-type ThyA subfamily. Homodimer.

It is found in the cytoplasm. It catalyses the reaction dUMP + (6R)-5,10-methylene-5,6,7,8-tetrahydrofolate = 7,8-dihydrofolate + dTMP. The protein operates within pyrimidine metabolism; dTTP biosynthesis. Its function is as follows. Catalyzes the reductive methylation of 2'-deoxyuridine-5'-monophosphate (dUMP) to 2'-deoxythymidine-5'-monophosphate (dTMP) while utilizing 5,10-methylenetetrahydrofolate (mTHF) as the methyl donor and reductant in the reaction, yielding dihydrofolate (DHF) as a by-product. This enzymatic reaction provides an intracellular de novo source of dTMP, an essential precursor for DNA biosynthesis. The polypeptide is Thymidylate synthase (Streptococcus gordonii (strain Challis / ATCC 35105 / BCRC 15272 / CH1 / DL1 / V288)).